The chain runs to 421 residues: 4-hydroxy-3-methylbut-2-en-1-yl diphosphate synthase (flavodoxin) (421 aa).

[4Fe-4S] cluster is bound by residues C298, C301, C344, and E351.

It belongs to the IspG family. [4Fe-4S] cluster is required as a cofactor.

It carries out the reaction (2E)-4-hydroxy-3-methylbut-2-enyl diphosphate + oxidized [flavodoxin] + H2O + 2 H(+) = 2-C-methyl-D-erythritol 2,4-cyclic diphosphate + reduced [flavodoxin]. Its pathway is isoprenoid biosynthesis; isopentenyl diphosphate biosynthesis via DXP pathway; isopentenyl diphosphate from 1-deoxy-D-xylulose 5-phosphate: step 5/6. Its function is as follows. Converts 2C-methyl-D-erythritol 2,4-cyclodiphosphate (ME-2,4cPP) into 1-hydroxy-2-methyl-2-(E)-butenyl 4-diphosphate. The sequence is that of 4-hydroxy-3-methylbut-2-en-1-yl diphosphate synthase (flavodoxin) from Neisseria gonorrhoeae (strain ATCC 700825 / FA 1090).